The chain runs to 130 residues: UPF0251 protein MmarC5_0986 (130 aa).

Belongs to the UPF0251 family.

This chain is UPF0251 protein MmarC5_0986, found in Methanococcus maripaludis (strain C5 / ATCC BAA-1333).